Consider the following 303-residue polypeptide: Diaminopimelate epimerase (303 aa).

Residues Asn15, Gln47, and Asn67 each contribute to the substrate site. Catalysis depends on Cys76, which acts as the Proton donor. Residues 77–78 (GN), Asn163, Asn197, and 215–216 (ER) contribute to the substrate site. The active-site Proton acceptor is the Cys224. 225–226 (GS) lines the substrate pocket. Residues 278–303 (FDPATGEWSRDTQGLQGSGNADRGAA) form a disordered region.

Belongs to the diaminopimelate epimerase family. Homodimer.

The protein resides in the cytoplasm. The enzyme catalyses (2S,6S)-2,6-diaminopimelate = meso-2,6-diaminopimelate. It participates in amino-acid biosynthesis; L-lysine biosynthesis via DAP pathway; DL-2,6-diaminopimelate from LL-2,6-diaminopimelate: step 1/1. Its function is as follows. Catalyzes the stereoinversion of LL-2,6-diaminopimelate (L,L-DAP) to meso-diaminopimelate (meso-DAP), a precursor of L-lysine and an essential component of the bacterial peptidoglycan. This Brucella abortus (strain S19) protein is Diaminopimelate epimerase.